Consider the following 438-residue polypeptide: V-type ATP synthase beta chain (438 aa).

The protein belongs to the ATPase alpha/beta chains family.

Functionally, produces ATP from ADP in the presence of a proton gradient across the membrane. The V-type beta chain is a regulatory subunit. The chain is V-type ATP synthase beta chain (atpB) from Chlamydia trachomatis serovar D (strain ATCC VR-885 / DSM 19411 / UW-3/Cx).